The following is a 186-amino-acid chain: Transposon Tn501 resolvase (186 aa).

One can recognise a Resolvase/invertase-type recombinase catalytic domain in the interval 4–137 (HRIGYVRVSS…EGITLAKQRG (134 aa)). The active-site O-(5'-phospho-DNA)-serine intermediate is S12. Positions 17 to 38 (NPERQLEQTQVSKVFTDKASGK) are disordered. The H-T-H motif DNA-binding region spans 164–183 (KAQLAREFNISRETLYQYLR).

The protein belongs to the site-specific recombinase resolvase family.

In terms of biological role, resolvase catalyzes the resolution (a site-specific recombination) of the cointegrated replicon to yield the final transposition products. The sequence is that of Transposon Tn501 resolvase (tnpR) from Pseudomonas aeruginosa.